The primary structure comprises 402 residues: Putative F-box protein At3g20030 (402 aa).

Residues 1-56 (MTMMSDLSQDLLEEILSRVPRTSLGAVRSTCKRWNTLFKDRILCKAEETRDQFRFI) enclose the F-box domain.

The chain is Putative F-box protein At3g20030 from Arabidopsis thaliana (Mouse-ear cress).